Consider the following 1307-residue polypeptide: MLGWVQRVLPQPPGTPQKTEEGAGPQPETESKPEANPQPEPEVQPEPEPEPEPAPEEAAPEVQTLPPEEPVEGEDVAEAGPSLQETQEADPPQPTSQAQVAVVKVNRPSSWMLSWFWKGMEKVVPQPVYSSSGGQNLAAGEGGPDQDGAQTLEPCGTGDPGSEDGSDKTSKTQDTEPSLWLLRWLELNLEKVLPQPPTPSQAWKVEPEGAVLEPDPPGTPMEVEPTENPSQPNPGPVEPEEEPAAEPQPGFQASSLPPPGDPVRLIEWLLHRLEMALPQPVLHGKAAEQEPSCPGTCDVQTISILPVEQAEHDLVLEDVDSCWEDTQQEDGASLQETELAPIYEDESEAMVEMPRELPQIQEEEEEEKEEKEEKEEEEEKEEEEKREEEKKKEKEEEKKEKEKEEKEEKEEKEEEEKEEKEEEEKEEKEEEEKEEKEEEEEEEEEEEEEEPIVLLDSCLVVQADVDQCQLERAQPETASIQELPEEEEEKEEEKKEEEEEKEEEEEKEEEEEKEEEGEATNSTVPATKEHPELQVEDTDAEAGPLIPEETIPPPERPPVSPAKSDTLAVPGAATHRKKLPSQDDEAEELKALSPAESPVVAWSDPTTPQEADGEDRAASTASQNSAIINDRLQELVKMFKERTEKVKEKLIDPDVTSDEESPKPSPAKKAPDSAPAQKPAEAEAAEEEHYCDMLCCKFKRRPWKMYQFPQSIDPLTNLMYILWLFFVVLAWNWNCWLIPVRWAFPYQRADNIHLWLLMDYLCDFIYLLDITVFQMRLQFVKGGDIITDKKEMRNNYLKSQRFKMDLLCLLPLDFLYLKLGVNPLLRLPRCLKYMAFFEFNNRLEAILSKAYVYRVIRTTAYLLYSLHLNSCLYYWASAFQGIGSTHWVYDGVGNSYIRCYYWAVKTLITIGGLPDPQTLFEIVFQLLNYFTGVFAFSVMIGQMRDVVGAATAGQTYYRSCMDSTVKYMNFYKIPRSVQNRVKTWYEYTWHSQGMLDESELMVQLPDKMRLDLAIDVNYNIVSKVALFQGCDRQMIFDMLKRLRSVVYLPNDYVCKKGEIGREMYIIQAGQVQVLGGPDGKAVLVTLKAGSVFGEISLLAVGGGNRRTANVVAHGFTNLFILDKKDLNEILVHYPESQKLLRKKARRMLRNNNKPKEEKSVLILPPRAGTPKLFNAALAAAGKMGPRGAKGGKLAHLRARLKELAALEAAARQQQLLEQAKSSQEAGGEEGSGATDQPAPQEPSEPKEPPEPPAPSSPPPASAKPEGSTEEAAGPPEPSVRIRVSPGPDPGEQTLSVEMLEEKKEEVE.

Disordered regions lie at residues 1–101, 126–178, 193–262, 320–458, 470–625, and 648–681; these read MLGW…AQVA, QPVY…TEPS, LPQP…PGDP, DSCW…LDSC, LERA…SQNS, and EKLI…KPAE. Residues 1 to 720 are Cytoplasmic-facing; the sequence is MLGWVQRVLP…SIDPLTNLMY (720 aa). Acidic residues predominate over residues 43 to 59; that stretch reads VQPEPEPEPEPAPEEAA. A compositionally biased stretch (basic and acidic residues) spans 165–174; sequence GSDKTSKTQD. Over residues 361-386 the composition is skewed to acidic residues; sequence QEEEEEEKEEKEEKEEEEEKEEEEKR. The span at 387-406 shows a compositional bias: basic and acidic residues; that stretch reads EEEKKKEKEEEKKEKEKEEK. Acidic residues-rich tracts occupy residues 407 to 451 and 483 to 518; these read EEKE…EEEP and LPEE…EEGE. The span at 550–560 shows a compositional bias: pro residues; sequence TIPPPERPPVS. The segment at 621 to 631 is calmodulin-binding CaM1; it reads ASQNSAIINDR. The helical transmembrane segment at 721–742 threads the bilayer; sequence ILWLFFVVLAWNWNCWLIPVRW. The Extracellular portion of the chain corresponds to 743-751; that stretch reads AFPYQRADN. A helical transmembrane segment spans residues 752 to 773; sequence IHLWLLMDYLCDFIYLLDITVF. Topologically, residues 774-788 are cytoplasmic; the sequence is QMRLQFVKGGDIITD. A helical transmembrane segment spans residues 789 to 808; the sequence is KKEMRNNYLKSQRFKMDLLC. Over 809-824 the chain is Extracellular; that stretch reads LLPLDFLYLKLGVNPL. The helical transmembrane segment at 825–837 threads the bilayer; the sequence is LRLPRCLKYMAFF. Residues 838 to 849 are Cytoplasmic-facing; sequence EFNNRLEAILSK. Residues 850–872 traverse the membrane as a helical segment; sequence AYVYRVIRTTAYLLYSLHLNSCL. The segment at 850 to 949 is ion conduction pathway; the sequence is AYVYRVIRTT…IGQMRDVVGA (100 aa). The Extracellular segment spans residues 873-895; that stretch reads YYWASAFQGIGSTHWVYDGVGNS. The next 2 membrane-spanning stretches (helical) occupy residues 896 to 922 and 923 to 948; these read YIRC…LFEI and VFQL…DVVG. At 949-1307 the chain is on the cytoplasmic side; sequence AATAGQTYYR…MLEEKKEEVE (359 aa). The tract at residues 952 to 1028 is C-linker; it reads AGQTYYRSCM…NIVSKVALFQ (77 aa). Residues 1026–1130 form a cNMP-binding domain region; the sequence is LFQGCDRQMI…LDKKDLNEIL (105 aa). A cyclic nucleotide-binding domain region spans residues 1032 to 1148; the sequence is RQMIFDMLKR…LLRKKARRML (117 aa). Residues glycine 1093, glutamate 1094, serine 1096, arginine 1106, and threonine 1107 each coordinate 3',5'-cyclic GMP. Position 1106 (arginine 1106) interacts with 3',5'-cyclic AMP. A calmodulin-binding CaM2 region spans residues 1212–1218; the sequence is QQQLLEQ. A compositionally biased stretch (low complexity) spans 1214 to 1238; it reads QLLEQAKSSQEAGGEEGSGATDQPA. The disordered stretch occupies residues 1214–1307; that stretch reads QLLEQAKSSQ…MLEEKKEEVE (94 aa). Over residues 1250-1261 the composition is skewed to pro residues; it reads EPPAPSSPPPAS.

This sequence belongs to the cyclic nucleotide-gated cation channel (TC 1.A.1.5) family. CNGB1 subfamily. As to quaternary structure, the rod cyclic nucleotide-gated channel is a heterotetramer composed of CNGA1 and CNGB1 subunits with 3:1 stoichiometry. CNGA1:CNGB1 channel binds Ca(2+)-bound CALM1 via CaM1 and CaM2 regions of the CNGB1 subunit; this interaction modulates the affinity of the channel for cNMPs in response to intracellular Ca(2+) levels. The olfactory cyclic nucleotide-gated channel is a heterotetramer composed of CNGA2, CNGA4 and CNGB1b subunits with 2:1:1 stoichiometry. In terms of tissue distribution, expressed in olfactory sensory cilia (at protein level).

The protein resides in the cell projection. The protein localises to the cilium membrane. The enzyme catalyses Ca(2+)(in) = Ca(2+)(out). It carries out the reaction Na(+)(in) = Na(+)(out). It catalyses the reaction K(+)(in) = K(+)(out). The catalysed reaction is NH4(+)(in) = NH4(+)(out). The enzyme catalyses Rb(+)(in) = Rb(+)(out). It carries out the reaction Li(+)(in) = Li(+)(out). It catalyses the reaction Cs(+)(in) = Cs(+)(out). In terms of biological role, pore-forming subunit of the rod cyclic nucleotide-gated channel. Mediates rod photoresponses at dim light converting transient changes in intracellular cGMP levels into electrical signals. In the dark, cGMP levels are high and keep the channel open enabling a steady inward current carried by Na(+) and Ca(2+) ions that leads to membrane depolarization and neurotransmitter release from synaptic terminals. Upon photon absorption cGMP levels decline leading to channel closure and membrane hyperpolarization that ultimately slows neurotransmitter release and signals the presence of light, the end point of the phototransduction cascade. Conducts cGMP- and cAMP-gated ion currents, with permeability for monovalent and divalent cations. The selectivity for Ca(2+) over Na(+) increases with cGMP concentrations, whereas the selectivity among monovalent ions is independent of the cGMP levels. Functionally, pore-forming subunit of the olfactory cyclic nucleotide-gated channel. Operates in the cilia of olfactory sensory neurons where chemical stimulation of the odorant is converted to an electrical signal. Mediates odorant-induced cAMP-dependent Ca(2+) influx triggering neuron depolarization. The rise of intracellular Ca(2+) levels potentiates the olfactory response by activating Ca(2+)-dependent Cl(-) channels, but it also serves as a negative feedback signal to desensitize the channel for rapid adaptation to odorants. The sequence is that of Cyclic nucleotide-gated channel beta-1 from Rattus norvegicus (Rat).